Here is a 267-residue protein sequence, read N- to C-terminus: 3-methyl-2-oxobutanoate hydroxymethyltransferase (267 aa).

Residues aspartate 45 and aspartate 84 each coordinate Mg(2+). 3-methyl-2-oxobutanoate is bound by residues 45–46, aspartate 84, and lysine 113; that span reads DS. Glutamate 115 is a Mg(2+) binding site. Glutamate 182 functions as the Proton acceptor in the catalytic mechanism.

It belongs to the PanB family. As to quaternary structure, homodecamer; pentamer of dimers. Mg(2+) is required as a cofactor.

The protein localises to the cytoplasm. It carries out the reaction 3-methyl-2-oxobutanoate + (6R)-5,10-methylene-5,6,7,8-tetrahydrofolate + H2O = 2-dehydropantoate + (6S)-5,6,7,8-tetrahydrofolate. It functions in the pathway cofactor biosynthesis; coenzyme A biosynthesis. In terms of biological role, catalyzes the reversible reaction in which hydroxymethyl group from 5,10-methylenetetrahydrofolate is transferred onto alpha-ketoisovalerate to form ketopantoate. This chain is 3-methyl-2-oxobutanoate hydroxymethyltransferase, found in Saccharolobus solfataricus (strain ATCC 35092 / DSM 1617 / JCM 11322 / P2) (Sulfolobus solfataricus).